The primary structure comprises 150 residues: D-aminoacyl-tRNA deacylase (150 aa).

The Gly-cisPro motif, important for rejection of L-amino acids signature appears at 137-138 (GP).

It belongs to the DTD family. Homodimer.

The protein localises to the cytoplasm. The catalysed reaction is glycyl-tRNA(Ala) + H2O = tRNA(Ala) + glycine + H(+). The enzyme catalyses a D-aminoacyl-tRNA + H2O = a tRNA + a D-alpha-amino acid + H(+). Functionally, an aminoacyl-tRNA editing enzyme that deacylates mischarged D-aminoacyl-tRNAs. Also deacylates mischarged glycyl-tRNA(Ala), protecting cells against glycine mischarging by AlaRS. Acts via tRNA-based rather than protein-based catalysis; rejects L-amino acids rather than detecting D-amino acids in the active site. By recycling D-aminoacyl-tRNA to D-amino acids and free tRNA molecules, this enzyme counteracts the toxicity associated with the formation of D-aminoacyl-tRNA entities in vivo and helps enforce protein L-homochirality. This chain is D-aminoacyl-tRNA deacylase, found in Listeria innocua serovar 6a (strain ATCC BAA-680 / CLIP 11262).